The primary structure comprises 225 residues: Transcriptional activator protein BglJ (225 aa).

Residues 146–211 enclose the HTH luxR-type domain; it reads YINQSRTLSP…GLLEAADILL (66 aa). The H-T-H motif DNA-binding region spans 170–189; it reads MTQIAEQLKRNIKTIRAHKF.

In terms of assembly, forms a complex with RcsB; genetically both BglJ and RcsB are required to relieve bgl operon repression by H-NS and by StpA.

In terms of biological role, a crytic transcriptional activator. When its expression is induced it relieves H-NS repression of the bgl operon. Acts independently of transcription factor LeuO. The protein is Transcriptional activator protein BglJ (bglJ) of Escherichia coli (strain K12).